The following is a 283-amino-acid chain: NAD kinase (283 aa).

Catalysis depends on aspartate 65, which acts as the Proton acceptor. Residues 65–66 (DG), 139–140 (ND), arginine 150, arginine 167, aspartate 169, 180–185 (TGYSVS), and glutamine 239 contribute to the NAD(+) site.

This sequence belongs to the NAD kinase family. A divalent metal cation is required as a cofactor.

Its subcellular location is the cytoplasm. It catalyses the reaction NAD(+) + ATP = ADP + NADP(+) + H(+). Its function is as follows. Involved in the regulation of the intracellular balance of NAD and NADP, and is a key enzyme in the biosynthesis of NADP. Catalyzes specifically the phosphorylation on 2'-hydroxyl of the adenosine moiety of NAD to yield NADP. In Nitratidesulfovibrio vulgaris (strain DSM 19637 / Miyazaki F) (Desulfovibrio vulgaris), this protein is NAD kinase.